Reading from the N-terminus, the 887-residue chain is Transportin-2 (887 aa).

HEAT repeat units lie at residues 9 to 36 (GLQQ…DKLK), 41 to 79 (FPDF…AHYQ), 88 to 121 (FIKQ…KGEL), 127 to 164 (LLPQ…LDSD), 171 to 201 (NIMI…QFIM), 214 to 241 (FIEH…VMLL), 253 to 280 (HSII…FWLT), 296 to 386 (VQLI…LANV), 394 to 422 (HLLP…GAIA), 434 to 461 (PELI…TLSR), 475 to 508 (LKPL…EEEA), 516 to 549 (LSYI…ADSV), 557 to 595 (EYIQ…TALQ), 603 to 654 (EPVY…GLGG), 665 to 696 (IMTL…KACF), 704 to 737 (AEFM…MQMG), 745 to 780 (QMVL…YVCP), 788 to 821 (QQFI…IGVN), 830 to 861 (IFFC…KDQV), and 864 to 884 (ENWQ…LAAF). The Importin N-terminal domain maps to 31-99 (VQDKLKQLNQ…KQECLNNIGD (69 aa)). The interval 344–363 (TLTHEAERPDSSEDAEDDDD) is disordered. K852 bears the N6-acetyllysine mark.

The protein belongs to the importin beta family. Importin beta-2 subfamily.

The protein resides in the cytoplasm. It localises to the nucleus. In terms of biological role, probably functions in nuclear protein import as nuclear transport receptor. Serves as receptor for nuclear localization signals (NLS) in cargo substrates. Is thought to mediate docking of the importin/substrate complex to the nuclear pore complex (NPC) through binding to nucleoporin and the complex is subsequently translocated through the pore by an energy requiring, Ran-dependent mechanism. At the nucleoplasmic side of the NPC, Ran binds to the importin, the importin/substrate complex dissociates and importin is re-exported from the nucleus to the cytoplasm where GTP hydrolysis releases Ran. The directionality of nuclear import is thought to be conferred by an asymmetric distribution of the GTP- and GDP-bound forms of Ran between the cytoplasm and nucleus. The chain is Transportin-2 (Tnpo2) from Mus musculus (Mouse).